The chain runs to 507 residues: Inositol-3-phosphate synthase (507 aa).

NAD(+)-binding residues include Gly70, Gly71, Asn72, Asn73, Asp143, Ile180, Gln190, Arg193, Thr230, Ala231, Asn232, Thr233, Gly281, Ser282, Asp306, Ser309, Asn340, Asn341, Asp342, Lys355, Ala391, Asp419, and Ser420.

Belongs to the myo-inositol 1-phosphate synthase family. Requires NAD(+) as cofactor.

It localises to the cytoplasm. The protein localises to the cytosol. Its subcellular location is the nucleus. The catalysed reaction is D-glucose 6-phosphate = 1D-myo-inositol 3-phosphate. It functions in the pathway polyol metabolism; myo-inositol biosynthesis; myo-inositol from D-glucose 6-phosphate: step 1/2. In terms of biological role, key enzyme in myo-inositol biosynthesis pathway that catalyzes the conversion of glucose 6-phosphate to 1-myo-inositol 1-phosphate in a NAD-dependent manner. This Citrus paradisi (Grapefruit) protein is Inositol-3-phosphate synthase.